A 266-amino-acid chain; its full sequence is Metallo-beta-lactamase domain-containing protein 1 (266 aa).

The tract at residues 48–71 (LPQTRGPASSHRESPRGSGGAEAA) is disordered. Residues His114, His116, Asp118, His119, His169, Asp192, and His231 each contribute to the Zn(2+) site. The tract at residues 229 to 266 (PGHGPPFRVLREASQPETEGGGNSQQEPVVGDEEPALH) is disordered.

It belongs to the metallo-beta-lactamase superfamily. Glyoxalase II family. Homodimer. The cofactor is Zn(2+).

The protein localises to the cytoplasm. It localises to the cytosol. It is found in the nucleus. It carries out the reaction a ribonucleotidyl-ribonucleotide-RNA + H2O = a 3'-end ribonucleotide-RNA + a 5'-end 5'-phospho-ribonucleoside-RNA + H(+). Its function is as follows. Endoribonuclease that catalyzes the hydrolysis of histone-coding pre-mRNA 3'-end. Involved in histone pre-mRNA processing during the S-phase of the cell cycle, which is required for entering/progressing through S-phase. Cleaves histone pre-mRNA at a major and a minor cleavage site after the 5'-ACCCA-3' and the 5'-ACCCACA-3' sequence, respectively, and located downstream of the stem-loop. May require the presence of the HDE element located at the histone pre-RNA 3'-end to avoid non-specific cleavage. The protein is Metallo-beta-lactamase domain-containing protein 1 of Homo sapiens (Human).